We begin with the raw amino-acid sequence, 355 residues long: 3-dehydroquinate synthase (355 aa).

Residues 105–109 (GVVGD), 129–130 (TS), lysine 142, lysine 151, and 169–172 (TLKT) contribute to the NAD(+) site. Zn(2+) is bound by residues glutamate 184, histidine 246, and histidine 263.

Belongs to the sugar phosphate cyclases superfamily. Dehydroquinate synthase family. Requires NAD(+) as cofactor. Co(2+) serves as cofactor. Zn(2+) is required as a cofactor.

Its subcellular location is the cytoplasm. It carries out the reaction 7-phospho-2-dehydro-3-deoxy-D-arabino-heptonate = 3-dehydroquinate + phosphate. It functions in the pathway metabolic intermediate biosynthesis; chorismate biosynthesis; chorismate from D-erythrose 4-phosphate and phosphoenolpyruvate: step 2/7. Its function is as follows. Catalyzes the conversion of 3-deoxy-D-arabino-heptulosonate 7-phosphate (DAHP) to dehydroquinate (DHQ). In Streptococcus agalactiae serotype V (strain ATCC BAA-611 / 2603 V/R), this protein is 3-dehydroquinate synthase.